The primary structure comprises 102 residues: Small ribosomal subunit protein uS10 (102 aa).

It belongs to the universal ribosomal protein uS10 family. Part of the 30S ribosomal subunit.

Involved in the binding of tRNA to the ribosomes. This Parafrankia sp. (strain EAN1pec) protein is Small ribosomal subunit protein uS10.